The sequence spans 477 residues: Dihydrolipoyl dehydrogenase (477 aa).

Residues 34–49, Lys-58, and Gly-122 contribute to the FAD site; that span reads EKYK…GGTC. A disulfide bridge connects residues Cys-49 and Cys-54. Residues 188-192, Glu-211, Val-245, and 276-279 each bind NAD(+); these read GAGVI and AVGR. FAD contacts are provided by Asp-319 and Ala-327. His-451 serves as the catalytic Proton acceptor.

This sequence belongs to the class-I pyridine nucleotide-disulfide oxidoreductase family. Homodimer. The cofactor is FAD.

Its subcellular location is the cytoplasm. It catalyses the reaction N(6)-[(R)-dihydrolipoyl]-L-lysyl-[protein] + NAD(+) = N(6)-[(R)-lipoyl]-L-lysyl-[protein] + NADH + H(+). In terms of biological role, the pyruvate dehydrogenase complex catalyzes the overall conversion of pyruvate to acetyl-CoA and CO(2). It contains multiple copies of three enzymatic components: pyruvate dehydrogenase (E1), dihydrolipoamide acetyltransferase (E2) and lipoamide dehydrogenase (E3). The protein is Dihydrolipoyl dehydrogenase of Azotobacter vinelandii.